Consider the following 710-residue polypeptide: Exocyst complex component 5 (710 aa).

A coiled-coil region spans residues 44–96; the sequence is DTFIQTIKDLKILQEKQQSKCERLEESLRQEKESHAKKIAKLQERHQTAIDVF.

This sequence belongs to the SEC10 family. As to quaternary structure, the exocyst complex is composed of Sec3/Exoc1, Sec5/Exoc2, Sec6/Exoc3, Sec8/Exoc4, Sec10/Exoc5, Sec15/Exoc6, Exo70/Exoc7 and Exo84/Exoc8.

In terms of biological role, component of the exocyst complex involved in the docking of exocytic vesicles with fusion sites on the plasma membrane. This chain is Exocyst complex component 5, found in Drosophila melanogaster (Fruit fly).